The primary structure comprises 338 residues: Ketol-acid reductoisomerase (NADP(+)) (338 aa).

The KARI N-terminal Rossmann domain maps to Met1–Thr181. Residues Tyr24–Gln27, Arg47, Ser50, Ser52, and Asp82–Gln85 each bind NADP(+). His107 is an active-site residue. Gly133 is an NADP(+) binding site. The region spanning Thr182–Ile327 is the KARI C-terminal knotted domain. Mg(2+) contacts are provided by Asp190, Glu194, Glu226, and Glu230. Ser251 is a binding site for substrate.

This sequence belongs to the ketol-acid reductoisomerase family. Requires Mg(2+) as cofactor.

It catalyses the reaction (2R)-2,3-dihydroxy-3-methylbutanoate + NADP(+) = (2S)-2-acetolactate + NADPH + H(+). It carries out the reaction (2R,3R)-2,3-dihydroxy-3-methylpentanoate + NADP(+) = (S)-2-ethyl-2-hydroxy-3-oxobutanoate + NADPH + H(+). The protein operates within amino-acid biosynthesis; L-isoleucine biosynthesis; L-isoleucine from 2-oxobutanoate: step 2/4. Its pathway is amino-acid biosynthesis; L-valine biosynthesis; L-valine from pyruvate: step 2/4. Functionally, involved in the biosynthesis of branched-chain amino acids (BCAA). Catalyzes an alkyl-migration followed by a ketol-acid reduction of (S)-2-acetolactate (S2AL) to yield (R)-2,3-dihydroxy-isovalerate. In the isomerase reaction, S2AL is rearranged via a Mg-dependent methyl migration to produce 3-hydroxy-3-methyl-2-ketobutyrate (HMKB). In the reductase reaction, this 2-ketoacid undergoes a metal-dependent reduction by NADPH to yield (R)-2,3-dihydroxy-isovalerate. The sequence is that of Ketol-acid reductoisomerase (NADP(+)) from Methylococcus capsulatus (strain ATCC 33009 / NCIMB 11132 / Bath).